Consider the following 114-residue polypeptide: Iron-sulfur cluster insertion protein ErpA (114 aa).

Iron-sulfur cluster-binding residues include C42, C106, and C108.

Belongs to the HesB/IscA family. In terms of assembly, homodimer. Requires iron-sulfur cluster as cofactor.

Its function is as follows. Required for insertion of 4Fe-4S clusters for at least IspG. The chain is Iron-sulfur cluster insertion protein ErpA from Haemophilus influenzae (strain PittEE).